Reading from the N-terminus, the 145-residue chain is D-aminoacyl-tRNA deacylase (145 aa).

Residues 137–138 carry the Gly-cisPro motif, important for rejection of L-amino acids motif; sequence GP.

Belongs to the DTD family. In terms of assembly, homodimer.

It localises to the cytoplasm. The enzyme catalyses glycyl-tRNA(Ala) + H2O = tRNA(Ala) + glycine + H(+). It catalyses the reaction a D-aminoacyl-tRNA + H2O = a tRNA + a D-alpha-amino acid + H(+). An aminoacyl-tRNA editing enzyme that deacylates mischarged D-aminoacyl-tRNAs. Also deacylates mischarged glycyl-tRNA(Ala), protecting cells against glycine mischarging by AlaRS. Acts via tRNA-based rather than protein-based catalysis; rejects L-amino acids rather than detecting D-amino acids in the active site. By recycling D-aminoacyl-tRNA to D-amino acids and free tRNA molecules, this enzyme counteracts the toxicity associated with the formation of D-aminoacyl-tRNA entities in vivo and helps enforce protein L-homochirality. This is D-aminoacyl-tRNA deacylase from Teredinibacter turnerae (strain ATCC 39867 / T7901).